The sequence spans 326 residues: Putative ribose-phosphate pyrophosphokinase 2 (326 aa).

ATP contacts are provided by residues 43 to 45 and 102 to 103; these read DGE and RQ. His136 contacts Mg(2+). Residues Asp226 and 230–234 contribute to the D-ribose 5-phosphate site; that span reads NTGKT.

This sequence belongs to the ribose-phosphate pyrophosphokinase family. Class I subfamily. In terms of assembly, homohexamer. Requires Mg(2+) as cofactor.

The protein localises to the cytoplasm. The catalysed reaction is D-ribose 5-phosphate + ATP = 5-phospho-alpha-D-ribose 1-diphosphate + AMP + H(+). It participates in metabolic intermediate biosynthesis; 5-phospho-alpha-D-ribose 1-diphosphate biosynthesis; 5-phospho-alpha-D-ribose 1-diphosphate from D-ribose 5-phosphate (route I): step 1/1. Its function is as follows. Involved in the biosynthesis of the central metabolite phospho-alpha-D-ribosyl-1-pyrophosphate (PRPP) via the transfer of pyrophosphoryl group from ATP to 1-hydroxyl of ribose-5-phosphate (Rib-5-P). In Streptococcus mutans serotype c (strain ATCC 700610 / UA159), this protein is Putative ribose-phosphate pyrophosphokinase 2.